The chain runs to 179 residues: MVQAWYMDDAPGDPRQPHRPDPGRPVGLEQLRRLGVLYWKLDADKYENDPELEKIRRERNYSWMDIITICKDKLPNYEEKIKMFYEEHLHLDDEIRYILDGSGYFDVRDKEDQWIRIFMEKGDMVTLPAGIYHRFTVDEKNYTKAMRLFVGEPVWTAYNRPADHFEARGQYVKFLAQTA.

The tract at residues 7-26 (MDDAPGDPRQPHRPDPGRPV) is disordered. Residues His-88, His-90, Glu-94, and His-133 each contribute to the Fe(2+) site. His-88, His-90, Glu-94, and His-133 together coordinate Ni(2+).

Belongs to the acireductone dioxygenase (ARD) family. As to quaternary structure, monomer. Interacts with MMP14. Requires Fe(2+) as cofactor. Ni(2+) is required as a cofactor. In terms of tissue distribution, detected in heart, colon, lung, stomach, brain, spleen, liver, skeletal muscle and kidney.

The protein localises to the cytoplasm. It localises to the nucleus. Its subcellular location is the cell membrane. It carries out the reaction 1,2-dihydroxy-5-(methylsulfanyl)pent-1-en-3-one + O2 = 4-methylsulfanyl-2-oxobutanoate + formate + 2 H(+). It catalyses the reaction 1,2-dihydroxy-5-(methylsulfanyl)pent-1-en-3-one + O2 = 3-(methylsulfanyl)propanoate + CO + formate + 2 H(+). The protein operates within amino-acid biosynthesis; L-methionine biosynthesis via salvage pathway; L-methionine from S-methyl-5-thio-alpha-D-ribose 1-phosphate: step 5/6. Catalyzes 2 different reactions between oxygen and the acireductone 1,2-dihydroxy-3-keto-5-methylthiopentene (DHK-MTPene) depending upon the metal bound in the active site. Fe-containing acireductone dioxygenase (Fe-ARD) produces formate and 2-keto-4-methylthiobutyrate (KMTB), the alpha-ketoacid precursor of methionine in the methionine recycle pathway. Ni-containing acireductone dioxygenase (Ni-ARD) produces methylthiopropionate, carbon monoxide and formate, and does not lie on the methionine recycle pathway. Also down-regulates cell migration mediated by MMP14. Necessary for hepatitis C virus replication in an otherwise non-permissive cell line. In Homo sapiens (Human), this protein is Acireductone dioxygenase.